Here is a 223-residue protein sequence, read N- to C-terminus: ATP-dependent dethiobiotin synthetase BioD (223 aa).

T16 serves as a coordination point for Mg(2+). K37 is an active-site residue. S41 is a substrate binding site. The Mg(2+) site is built by D50 and E111. Residues D50, 111 to 114 (EGAG), and 171 to 172 (NR) contribute to the ATP site.

This sequence belongs to the dethiobiotin synthetase family. As to quaternary structure, homodimer. Mg(2+) is required as a cofactor.

The protein localises to the cytoplasm. The enzyme catalyses (7R,8S)-7,8-diammoniononanoate + CO2 + ATP = (4R,5S)-dethiobiotin + ADP + phosphate + 3 H(+). It participates in cofactor biosynthesis; biotin biosynthesis; biotin from 7,8-diaminononanoate: step 1/2. Functionally, catalyzes a mechanistically unusual reaction, the ATP-dependent insertion of CO2 between the N7 and N8 nitrogen atoms of 7,8-diaminopelargonic acid (DAPA, also called 7,8-diammoniononanoate) to form a ureido ring. This Anaeromyxobacter dehalogenans (strain 2CP-1 / ATCC BAA-258) protein is ATP-dependent dethiobiotin synthetase BioD.